The sequence spans 733 residues: Polyribonucleotide nucleotidyltransferase (733 aa).

The Mg(2+) site is built by D503 and D509. In terms of domain architecture, KH spans 570–629; it reads PRLTTIQIPVDAIGMVIGKGGETIRSITEETGAEINIDDDGTVTIACSSPEATKAAVETI. The 75-residue stretch at 639–713 folds into the S1 motif domain; it reads GTIYMGKVRD…GKTKFALSIK (75 aa).

This sequence belongs to the polyribonucleotide nucleotidyltransferase family. Requires Mg(2+) as cofactor.

The protein resides in the cytoplasm. The enzyme catalyses RNA(n+1) + phosphate = RNA(n) + a ribonucleoside 5'-diphosphate. Its function is as follows. Involved in mRNA degradation. Catalyzes the phosphorolysis of single-stranded polyribonucleotides processively in the 3'- to 5'-direction. This is Polyribonucleotide nucleotidyltransferase from Chlorobaculum tepidum (strain ATCC 49652 / DSM 12025 / NBRC 103806 / TLS) (Chlorobium tepidum).